Consider the following 712-residue polypeptide: Lactoperoxidase (712 aa).

A signal peptide spans 1-26 (MRVLLHLPALLASLILLQAAASTTRA). The propeptide occupies 27–80 (QTTRTSAISDTVSQAKVQVNKAFLDSRTRLKTAMSSETPTSRQLSEYLKHAKGR). Asparagine 106 is a glycosylation site (N-linked (GlcNAc...) asparagine). Cysteine 132 and cysteine 145 are disulfide-bonded. An N-linked (GlcNAc...) asparagine glycan is attached at asparagine 212. Aspartate 225 lines the heme b pocket. Histidine 226 acts as the Proton acceptor in catalysis. Aspartate 227 contributes to the Ca(2+) binding site. 2 disulfides stabilise this stretch: cysteine 246/cysteine 256 and cysteine 250/cysteine 274. Ca(2+) is bound by residues threonine 301, phenylalanine 303, aspartate 305, and serine 307. At serine 315 the chain carries Phosphoserine. 2 N-linked (GlcNAc...) asparagine glycosylation sites follow: asparagine 322 and asparagine 358. Cysteine 354 and cysteine 365 are oxidised to a cystine. Residues glutamate 375 and histidine 468 each coordinate heme b. 3'-nitrotyrosine is present on tyrosine 482. 2 disulfides stabilise this stretch: cysteine 573–cysteine 630 and cysteine 671–cysteine 696.

This sequence belongs to the peroxidase family. XPO subfamily. Requires Ca(2+) as cofactor. It depends on heme b as a cofactor. In terms of tissue distribution, mammary gland, milk and salivary gland. Found in bronchial submucosal glands.

The protein resides in the secreted. It is found in the cytoplasm. The catalysed reaction is 2 a phenolic donor + H2O2 = 2 a phenolic radical donor + 2 H2O. The enzyme catalyses thiocyanate + H2O2 + H(+) = hypothiocyanous acid + H2O. It catalyses the reaction iodide + H2O2 = hypoiodite + H2O. Heme-containing oxidoreductase which catalyzes the conversion of thiocyanate (SCN(-)) into antimicrobial agent hypothiocyanous acid (OSCN(-)) in the presence of hydrogen peroxide (H2O2). Also involved in the conversion of iodide (I(-)) into hypoiodite (IO(-)) in the presence of H2O2. Responsible for the inactivation of a wide range of micro-organisms and hence, important component of defense mechanism. Shows antibacterial properties against Pseudomonas aeruginosa. The lactoperoxidase-SCN(-)-H2O2 system shows antibacterial properties against Burkholderia cepacia and Haemophilus influenzae in vitro. Present in mammary and salivary gland secretions and may contribute to airway host defense against infection. May contribute to maintaining an appropriate H2O2 cellular level, therefore protecting cells from H2O2-caused injuries and inflammation. The protein is Lactoperoxidase of Homo sapiens (Human).